We begin with the raw amino-acid sequence, 446 residues long: Glucose-6-phosphate isomerase (446 aa).

The active-site Proton donor is glutamate 287. Active-site residues include histidine 308 and lysine 422.

The protein belongs to the GPI family.

It is found in the cytoplasm. The catalysed reaction is alpha-D-glucose 6-phosphate = beta-D-fructose 6-phosphate. It functions in the pathway carbohydrate biosynthesis; gluconeogenesis. It participates in carbohydrate degradation; glycolysis; D-glyceraldehyde 3-phosphate and glycerone phosphate from D-glucose: step 2/4. Catalyzes the reversible isomerization of glucose-6-phosphate to fructose-6-phosphate. The polypeptide is Glucose-6-phosphate isomerase (Lactobacillus helveticus (strain DPC 4571)).